We begin with the raw amino-acid sequence, 366 residues long: MAEFVRAQIFGTTFEITSRYTDLQPVGMGAFGLVCSARDQLTGQPVAVKKIMKPFSTPVLSKRTYRELKLLKHLRHENIISLSDIFISPLEDIYFVTELLGTDLHRLLTSRPLEKQFIQYFLYQILRGLKYVHSAGVVHRDLKPSNILINENCDLKICDFGLARIQDPQMTGYVSTRYYRAPEIMLTWQKYDVEVDIWSAGCIFAEMLEGKPLFPGKDHVNQFSIITELLGTPPDDVIQTICSENTLRFVKSLPKRERQPLANKFKNADPEAVDLLERMLVFDPKKRIRAGEALAHEYLSPYHDPTDEPEAEEKFDWSFNDADLPVDTWKIMMYSEILDFHNIDQGNDAGQVLMEGGVAQAQQNYA.

Positions 20 to 299 (YTDLQPVGMG…AGEALAHEYL (280 aa)) constitute a Protein kinase domain. Residues 26-34 (VGMGAFGLV) and Lys-49 each bind ATP. Asp-141 functions as the Proton acceptor in the catalytic mechanism. Thr-171 bears the Phosphothreonine mark. Residues 171-173 (TGY) carry the TXY motif. Tyr-173 carries the phosphotyrosine modification.

The protein belongs to the protein kinase superfamily. Ser/Thr protein kinase family. MAP kinase subfamily. HOG1 sub-subfamily. Interacts with the AGC kinase ypkA. Interacts with sakA upon osmotic and cell wall stresses. The cofactor is Mg(2+). Post-translationally, dually phosphorylated on Thr-171 and Tyr-173, which activates the enzyme. Environmental stresses such as high temperature, osmotic stress, cold stress or ethanol stress modulate the activation of sakA via phosphorylation.

It localises to the cytoplasm. It is found in the nucleus. The enzyme catalyses L-seryl-[protein] + ATP = O-phospho-L-seryl-[protein] + ADP + H(+). It carries out the reaction L-threonyl-[protein] + ATP = O-phospho-L-threonyl-[protein] + ADP + H(+). With respect to regulation, activated by tyrosine and threonine phosphorylation. Deactivated by protein phosphatase 2C homolog 2 ptcB. Proline-directed serine/threonine-protein kinase involved in a signal transduction pathway that is activated by changes in the osmolarity of the extracellular environment. Controls osmotic regulation of transcription of target genes. Involved in environmental stress response. With mpkC, plays a redundant or cooperative role in the conidial stress resistance. Also plays a supportive role in osmotic stress adaptation when sakA is deficient. Involved in paradoxical growth, the cell wall integrity (CWI) pathway and biofilm formation. Also collaborates with mpkC to allow ful virulence in a neutropenic murine model ofinvasive pulmonary aspergillosis. MpkC and sakA have both independent and collaborative functions during the transcriptional response to transient osmotic stress and sakA not only seems to modulate pathways involved in nucleotide, fatty acid, nitrogen and organic acid biosynthesis but is also important for the activation of genes involved in mitochondrial and endoplasmic reticulum functions. The polypeptide is Mitogen-activated protein kinase sakA (Aspergillus fumigatus (strain ATCC MYA-4609 / CBS 101355 / FGSC A1100 / Af293) (Neosartorya fumigata)).